The primary structure comprises 164 residues: Lipoprotein signal peptidase (164 aa).

3 helical membrane-spanning segments follow: residues 12–32 (WLWLVVVVLIIDLGSKYLILQ), 70–90 (WFFAGIAIGISVILVVMMYRS), and 102–122 (ALIIGGALGNLFDRLWHGFVV). Catalysis depends on residues Asp-123 and Asp-141. Residues 137–157 (FNLADTAICVGAALIVLEGFL) form a helical membrane-spanning segment.

It belongs to the peptidase A8 family.

It is found in the cell inner membrane. The enzyme catalyses Release of signal peptides from bacterial membrane prolipoproteins. Hydrolyzes -Xaa-Yaa-Zaa-|-(S,diacylglyceryl)Cys-, in which Xaa is hydrophobic (preferably Leu), and Yaa (Ala or Ser) and Zaa (Gly or Ala) have small, neutral side chains.. The protein operates within protein modification; lipoprotein biosynthesis (signal peptide cleavage). Functionally, this protein specifically catalyzes the removal of signal peptides from prolipoproteins. This chain is Lipoprotein signal peptidase, found in Escherichia coli O6:K15:H31 (strain 536 / UPEC).